Here is a 313-residue protein sequence, read N- to C-terminus: Porphobilinogen deaminase (313 aa).

Residue Cys241 is modified to S-(dipyrrolylmethanemethyl)cysteine.

It belongs to the HMBS family. In terms of assembly, monomer. Dipyrromethane is required as a cofactor.

It catalyses the reaction 4 porphobilinogen + H2O = hydroxymethylbilane + 4 NH4(+). Its pathway is porphyrin-containing compound metabolism; protoporphyrin-IX biosynthesis; coproporphyrinogen-III from 5-aminolevulinate: step 2/4. In terms of biological role, tetrapolymerization of the monopyrrole PBG into the hydroxymethylbilane pre-uroporphyrinogen in several discrete steps. The polypeptide is Porphobilinogen deaminase (Idiomarina loihiensis (strain ATCC BAA-735 / DSM 15497 / L2-TR)).